Consider the following 556-residue polypeptide: 2-succinyl-5-enolpyruvyl-6-hydroxy-3-cyclohexene-1-carboxylate synthase (556 aa).

Belongs to the TPP enzyme family. MenD subfamily. In terms of assembly, homodimer. Mg(2+) serves as cofactor. Mn(2+) is required as a cofactor. The cofactor is thiamine diphosphate.

The catalysed reaction is isochorismate + 2-oxoglutarate + H(+) = 5-enolpyruvoyl-6-hydroxy-2-succinyl-cyclohex-3-ene-1-carboxylate + CO2. Its pathway is quinol/quinone metabolism; 1,4-dihydroxy-2-naphthoate biosynthesis; 1,4-dihydroxy-2-naphthoate from chorismate: step 2/7. It functions in the pathway quinol/quinone metabolism; menaquinone biosynthesis. Catalyzes the thiamine diphosphate-dependent decarboxylation of 2-oxoglutarate and the subsequent addition of the resulting succinic semialdehyde-thiamine pyrophosphate anion to isochorismate to yield 2-succinyl-5-enolpyruvyl-6-hydroxy-3-cyclohexene-1-carboxylate (SEPHCHC). This Staphylococcus haemolyticus (strain JCSC1435) protein is 2-succinyl-5-enolpyruvyl-6-hydroxy-3-cyclohexene-1-carboxylate synthase.